Reading from the N-terminus, the 91-residue chain is ATP synthase subunit c (91 aa).

Helical transmembrane passes span 4–24 and 53–73; these read FTMC…GTGI and IGLA…LIIL.

The protein belongs to the ATPase C chain family. F-type ATPases have 2 components, F(1) - the catalytic core - and F(0) - the membrane proton channel. F(1) has five subunits: alpha(3), beta(3), gamma(1), delta(1), epsilon(1). F(0) has three main subunits: a(1), b(2) and c(10-14). The alpha and beta chains form an alternating ring which encloses part of the gamma chain. F(1) is attached to F(0) by a central stalk formed by the gamma and epsilon chains, while a peripheral stalk is formed by the delta and b chains.

The protein resides in the cell inner membrane. Functionally, f(1)F(0) ATP synthase produces ATP from ADP in the presence of a proton or sodium gradient. F-type ATPases consist of two structural domains, F(1) containing the extramembraneous catalytic core and F(0) containing the membrane proton channel, linked together by a central stalk and a peripheral stalk. During catalysis, ATP synthesis in the catalytic domain of F(1) is coupled via a rotary mechanism of the central stalk subunits to proton translocation. Key component of the F(0) channel; it plays a direct role in translocation across the membrane. A homomeric c-ring of between 10-14 subunits forms the central stalk rotor element with the F(1) delta and epsilon subunits. The chain is ATP synthase subunit c from Citrifermentans bemidjiense (strain ATCC BAA-1014 / DSM 16622 / JCM 12645 / Bem) (Geobacter bemidjiensis).